The primary structure comprises 90 residues: Probable Fe(2+)-trafficking protein (90 aa).

The protein belongs to the Fe(2+)-trafficking protein family.

Could be a mediator in iron transactions between iron acquisition and iron-requiring processes, such as synthesis and/or repair of Fe-S clusters in biosynthetic enzymes. This Thioalkalivibrio sulfidiphilus (strain HL-EbGR7) protein is Probable Fe(2+)-trafficking protein.